The chain runs to 333 residues: Phosphate acyltransferase (333 aa).

The protein belongs to the PlsX family. As to quaternary structure, homodimer. Probably interacts with PlsY.

The protein localises to the cytoplasm. It carries out the reaction a fatty acyl-[ACP] + phosphate = an acyl phosphate + holo-[ACP]. The protein operates within lipid metabolism; phospholipid metabolism. Functionally, catalyzes the reversible formation of acyl-phosphate (acyl-PO(4)) from acyl-[acyl-carrier-protein] (acyl-ACP). This enzyme utilizes acyl-ACP as fatty acyl donor, but not acyl-CoA. In Lactobacillus helveticus (strain DPC 4571), this protein is Phosphate acyltransferase.